The following is a 99-amino-acid chain: Putative pterin-4-alpha-carbinolamine dehydratase (99 aa).

It belongs to the pterin-4-alpha-carbinolamine dehydratase family.

It catalyses the reaction (4aS,6R)-4a-hydroxy-L-erythro-5,6,7,8-tetrahydrobiopterin = (6R)-L-erythro-6,7-dihydrobiopterin + H2O. This chain is Putative pterin-4-alpha-carbinolamine dehydratase, found in Synechococcus sp. (strain CC9311).